We begin with the raw amino-acid sequence, 136 residues long: Ribonuclease VapC47 (136 aa).

In terms of domain architecture, PINc spans 2-104 (IYMDTSALTK…AIHLAAAAQI (103 aa)). Mg(2+) is bound by residues Asp5 and Asp94.

It belongs to the PINc/VapC protein family. Mg(2+) is required as a cofactor.

Its function is as follows. Toxic component of a type II toxin-antitoxin (TA) system. An RNase. Its toxic effect on colony formation is neutralized by coexpression with cognate antitoxin VapB47. The protein is Ribonuclease VapC47 of Mycobacterium tuberculosis (strain CDC 1551 / Oshkosh).